A 440-amino-acid chain; its full sequence is Adenylosuccinate synthetase 1, chloroplastic (440 aa).

GTP-binding positions include 13–19 (GDEGKGK) and 41–43 (GHT). Residue Asp-14 is the Proton acceptor of the active site. The Mg(2+) site is built by Asp-14 and Gly-41. IMP is bound by residues 14-17 (DEGK), 39-42 (NAGH), Thr-135, Arg-149, Gln-230, Thr-245, and Arg-313. Residue His-42 is the Proton donor of the active site. 309–315 (TVTRRKR) lines the substrate pocket. GTP contacts are provided by residues Arg-315 and 341 to 343 (KLD).

The protein belongs to the adenylosuccinate synthetase family. Homodimer. Mg(2+) is required as a cofactor.

It localises to the plastid. It is found in the chloroplast. The enzyme catalyses IMP + L-aspartate + GTP = N(6)-(1,2-dicarboxyethyl)-AMP + GDP + phosphate + 2 H(+). It participates in purine metabolism; AMP biosynthesis via de novo pathway; AMP from IMP: step 1/2. Its function is as follows. Plays an important role in the de novo pathway and in the salvage pathway of purine nucleotide biosynthesis. Catalyzes the first committed step in the biosynthesis of AMP from IMP. This chain is Adenylosuccinate synthetase 1, chloroplastic, found in Ricinus communis (Castor bean).